A 122-amino-acid polypeptide reads, in one-letter code: Large ribosomal subunit protein uL18 (122 aa).

The protein belongs to the universal ribosomal protein uL18 family. Part of the 50S ribosomal subunit; part of the 5S rRNA/L5/L18/L25 subcomplex. Contacts the 5S and 23S rRNAs.

This is one of the proteins that bind and probably mediate the attachment of the 5S RNA into the large ribosomal subunit, where it forms part of the central protuberance. This chain is Large ribosomal subunit protein uL18, found in Prochlorococcus marinus (strain MIT 9301).